Reading from the N-terminus, the 677-residue chain is Pentatricopeptide repeat-containing protein At5g39350 (677 aa).

PPR repeat units follow at residues 48–78, 79–113, 116–146, 151–181, 182–216, 217–251, 252–282, 283–317, 318–352, 353–383, 384–418, 419–453, 454–488, 489–523, 524–554, and 560–590; these read SGHILSTLSVTYALCGHITYARKLFEEMPQS, SLLSYNIVIRMYVREGLYHDAISVFIRMVSEGVKC, DGYTYPFVAKAAGELKSMKLGLVVHGRILRS, DKYVQNALLAMYMNFGKVEMARDVFDVMKNR, DVISWNTMISGYYRNGYMNDALMMFDWMVNESVDL, DHATIVSMLPVCGHLKDLEMGRNVHKLVEEKRLGD, KIEVKNALVNMYLKCGRMDEARFVFDRMERR, DVITWTCMINGYTEDGDVENALELCRLMQFEGVRP, NAVTIASLVSVCGDALKVNDGKCLHGWAVRQQVYS, DIIIETSLISMYAKCKRVDLCFRVFSGASKY, HTGPWSAIIAGCVQNELVSDALGLFKRMRREDVEP, NIATLNSLLPAYAALADLRQAMNIHCYLTKTGFMS, SLDAATGLVHVYSKCGTLESAHKIFNGIQEKHKSK, DVVLWGALISGYGMHGDGHNALQVFMEMVRSGVTP, NEITFTSALNACSHSGLVEEGLTLFRFMLEH, and RSNHYTCIVDLLGRAGRLDEAYNLITTIPFE. Residues 595–670 form a type E motif region; sequence VWGALLAACV…KPGHSTIEIR (76 aa).

The protein belongs to the PPR family. PCMP-E subfamily.

This is Pentatricopeptide repeat-containing protein At5g39350 (PCMP-E16) from Arabidopsis thaliana (Mouse-ear cress).